The chain runs to 848 residues: Adenylate cyclase (848 aa).

Positions 1 to 535 are catalytic; sequence MYLYIETLKQ…DVSHHFPLRL (535 aa). Residues 541-848 form a regulatory region; it reads KALYSPCEIR…DTPLLQQYFS (308 aa). His609 carries the phosphohistidine; by CRR modification.

Belongs to the adenylyl cyclase class-1 family.

It is found in the cytoplasm. It carries out the reaction ATP = 3',5'-cyclic AMP + diphosphate. The sequence is that of Adenylate cyclase (cyaA) from Escherichia coli O157:H7.